We begin with the raw amino-acid sequence, 228 residues long: MTEYLLSAGICMAIVSILLIGMAISNVSKGQYAKRFFFFATSCLVLTLVVVSSLSSSANASQTDNGVNRSGSEDPTVYSATSTKKLHKEPATLIKAIDGDTVKLMYKGQPMTFRLLLVDTPETKHPKKGVEKYGPEASAFTKKMVENANKIEVEFDKGQRTDKYGRGLAYIYADGKMVNEALVRQGLAKVAYVYKPNNTHEQLLRKSEAQAKKEKLNIWSEDNADSGQ.

The first 23 residues, 1–23 (MTEYLLSAGICMAIVSILLIGMA), serve as a signal peptide directing secretion. Positions 24–60 (ISNVSKGQYAKRFFFFATSCLVLTLVVVSSLSSSANA) are excised as a propeptide. The span at 58 to 70 (ANASQTDNGVNRS) shows a compositional bias: polar residues. Residues 58–83 (ANASQTDNGVNRSGSEDPTVYSATST) are disordered. Position 100 (Asp-100) interacts with Ca(2+). Arg-114 is a catalytic residue. The Ca(2+) site is built by Asp-119 and Thr-120. Catalysis depends on residues Glu-122 and Arg-166.

Belongs to the thermonuclease family. The cofactor is Ca(2+).

It is found in the secreted. It carries out the reaction Endonucleolytic cleavage to nucleoside 3'-phosphates and 3'-phosphooligonucleotide end-products.. Its function is as follows. Enzyme that catalyzes the hydrolysis of both DNA and RNA at the 5' position of the phosphodiester bond. This chain is Thermonuclease (nuc), found in Staphylococcus aureus (strain Mu50 / ATCC 700699).